An 842-amino-acid polypeptide reads, in one-letter code: Leucine--tRNA ligase (842 aa).

The 'HIGH' region motif lies at Pro44–His55. Residues Lys619–Ser623 carry the 'KMSKS' region motif. Residue Lys622 participates in ATP binding.

This sequence belongs to the class-I aminoacyl-tRNA synthetase family.

Its subcellular location is the cytoplasm. It carries out the reaction tRNA(Leu) + L-leucine + ATP = L-leucyl-tRNA(Leu) + AMP + diphosphate. This Borrelia recurrentis (strain A1) protein is Leucine--tRNA ligase.